We begin with the raw amino-acid sequence, 102 residues long: Large ribosomal subunit protein bL21 (102 aa).

Belongs to the bacterial ribosomal protein bL21 family. In terms of assembly, part of the 50S ribosomal subunit. Contacts protein L20.

In terms of biological role, this protein binds to 23S rRNA in the presence of protein L20. This Clavibacter sepedonicus (Clavibacter michiganensis subsp. sepedonicus) protein is Large ribosomal subunit protein bL21.